Reading from the N-terminus, the 376-residue chain is Glutamate 5-kinase (376 aa).

Residue K15 participates in ATP binding. Residues S56, D143, and N155 each contribute to the substrate site. 175-176 is an ATP binding site; sequence SD. The 78-residue stretch at 281 to 358 folds into the PUA domain; sequence KGTLTIDAGA…PDVMMILGIT (78 aa).

Belongs to the glutamate 5-kinase family.

It localises to the cytoplasm. The enzyme catalyses L-glutamate + ATP = L-glutamyl 5-phosphate + ADP. It participates in amino-acid biosynthesis; L-proline biosynthesis; L-glutamate 5-semialdehyde from L-glutamate: step 1/2. Catalyzes the transfer of a phosphate group to glutamate to form L-glutamate 5-phosphate. In Rhodopseudomonas palustris (strain TIE-1), this protein is Glutamate 5-kinase.